The following is a 270-amino-acid chain: Putative pyruvate, phosphate dikinase regulatory protein 2 (270 aa).

151 to 158 contacts ADP; it reads GVSRTSKT.

This sequence belongs to the pyruvate, phosphate/water dikinase regulatory protein family. PDRP subfamily.

The enzyme catalyses N(tele)-phospho-L-histidyl/L-threonyl-[pyruvate, phosphate dikinase] + ADP = N(tele)-phospho-L-histidyl/O-phospho-L-threonyl-[pyruvate, phosphate dikinase] + AMP + H(+). It catalyses the reaction N(tele)-phospho-L-histidyl/O-phospho-L-threonyl-[pyruvate, phosphate dikinase] + phosphate + H(+) = N(tele)-phospho-L-histidyl/L-threonyl-[pyruvate, phosphate dikinase] + diphosphate. Bifunctional serine/threonine kinase and phosphorylase involved in the regulation of the pyruvate, phosphate dikinase (PPDK) by catalyzing its phosphorylation/dephosphorylation. The protein is Putative pyruvate, phosphate dikinase regulatory protein 2 of Listeria monocytogenes serotype 4b (strain F2365).